The primary structure comprises 350 residues: Tetraacyldisaccharide 4'-kinase (350 aa).

48 to 55 (SAGGTGKT) contacts ATP.

Belongs to the LpxK family.

The catalysed reaction is a lipid A disaccharide + ATP = a lipid IVA + ADP + H(+). It participates in glycolipid biosynthesis; lipid IV(A) biosynthesis; lipid IV(A) from (3R)-3-hydroxytetradecanoyl-[acyl-carrier-protein] and UDP-N-acetyl-alpha-D-glucosamine: step 6/6. Functionally, transfers the gamma-phosphate of ATP to the 4'-position of a tetraacyldisaccharide 1-phosphate intermediate (termed DS-1-P) to form tetraacyldisaccharide 1,4'-bis-phosphate (lipid IVA). In Chlorobium limicola (strain DSM 245 / NBRC 103803 / 6330), this protein is Tetraacyldisaccharide 4'-kinase.